Consider the following 582-residue polypeptide: V-type ATP synthase alpha chain (582 aa).

An ATP-binding site is contributed by 231–238 (GPFGSGKT).

The protein belongs to the ATPase alpha/beta chains family.

The enzyme catalyses ATP + H2O + 4 H(+)(in) = ADP + phosphate + 5 H(+)(out). In terms of biological role, produces ATP from ADP in the presence of a proton gradient across the membrane. The V-type alpha chain is a catalytic subunit. The polypeptide is V-type ATP synthase alpha chain (Deinococcus deserti (strain DSM 17065 / CIP 109153 / LMG 22923 / VCD115)).